The following is a 288-amino-acid chain: Polyamine aminopropyltransferase (288 aa).

A PABS domain is found at 9-242 (SEWLDEYHQG…GLWSWTFASM (234 aa)). Q36 lines the S-methyl-5'-thioadenosine pocket. Spermidine contacts are provided by H67 and D91. S-methyl-5'-thioadenosine is bound by residues E111 and 143–144 (NG). Catalysis depends on D162, which acts as the Proton acceptor. P169 lines the S-methyl-5'-thioadenosine pocket.

Belongs to the spermidine/spermine synthase family. As to quaternary structure, homodimer or homotetramer.

It is found in the cytoplasm. It carries out the reaction S-adenosyl 3-(methylsulfanyl)propylamine + putrescine = S-methyl-5'-thioadenosine + spermidine + H(+). It functions in the pathway amine and polyamine biosynthesis; spermidine biosynthesis; spermidine from putrescine: step 1/1. Catalyzes the irreversible transfer of a propylamine group from the amino donor S-adenosylmethioninamine (decarboxy-AdoMet) to putrescine (1,4-diaminobutane) to yield spermidine. This is Polyamine aminopropyltransferase from Prochlorococcus marinus (strain NATL2A).